The following is a 163-amino-acid chain: Ribosome maturation factor RimP (163 aa).

Belongs to the RimP family.

The protein localises to the cytoplasm. Its function is as follows. Required for maturation of 30S ribosomal subunits. In Polynucleobacter asymbioticus (strain DSM 18221 / CIP 109841 / QLW-P1DMWA-1) (Polynucleobacter necessarius subsp. asymbioticus), this protein is Ribosome maturation factor RimP.